The primary structure comprises 388 residues: 2-methylene-furan-3-one reductase (388 aa).

Residues 1–60 constitute a chloroplast transit peptide; it reads MEALLSSTTLQLKPLHPPSSFSSLHSPFSSISVLRVKGSKKAETFIQRSNFSTVLPLRVS. Residues K125, 240-241, 263-266, Y281, 330-332, and 377-378 contribute to the NADP(+) site; these read GV, STGK, FVV, and RA. A substrate-binding site is contributed by K125.

This sequence belongs to the zinc-containing alcohol dehydrogenase family. Quinone oxidoreductase subfamily. As to quaternary structure, monomer.

The protein resides in the plastid. It localises to the chloroplast. The catalysed reaction is 4-hydroxy-2,5-dimethyl-furan-3(2H)-one + NADP(+) = 4-hydroxy-5-methyl-2-methylenefuran-3(2H)-one + NADPH + H(+). Functionally, enone oxidoreductase involved in the biosynthesis of 4-hydroxy-2,5-dimethyl-3(2H)-furanone (HDMF or furaneol). Can use both NADH and NADPH as the electron donor. This Solanum lycopersicum (Tomato) protein is 2-methylene-furan-3-one reductase (EO).